We begin with the raw amino-acid sequence, 490 residues long: Acetyl-coenzyme A carboxylase carboxyl transferase subunit beta, chloroplastic (490 aa).

The region spanning 221–490 (LWVQCENCYG…PLNQKSSKIK (270 aa)) is the CoA carboxyltransferase N-terminal domain. Zn(2+)-binding residues include Cys-225, Cys-228, Cys-244, and Cys-247. The C4-type zinc finger occupies 225–247 (CENCYGLNYKKFLKSKMNICEQC).

It belongs to the AccD/PCCB family. Acetyl-CoA carboxylase is a heterohexamer composed of biotin carboxyl carrier protein, biotin carboxylase and 2 subunits each of ACCase subunit alpha and ACCase plastid-coded subunit beta (accD). The cofactor is Zn(2+). In terms of tissue distribution, expressed in leaves, ripening and mature fruit.

The protein resides in the plastid. The protein localises to the chloroplast stroma. It localises to the chromoplast stroma. It carries out the reaction N(6)-carboxybiotinyl-L-lysyl-[protein] + acetyl-CoA = N(6)-biotinyl-L-lysyl-[protein] + malonyl-CoA. Its pathway is lipid metabolism; malonyl-CoA biosynthesis; malonyl-CoA from acetyl-CoA: step 1/1. Functionally, component of the acetyl coenzyme A carboxylase (ACC) complex. Biotin carboxylase (BC) catalyzes the carboxylation of biotin on its carrier protein (BCCP) and then the CO(2) group is transferred by the transcarboxylase to acetyl-CoA to form malonyl-CoA. Is up-regulated upon chromoplast differentiation, presumably for fatty acid biosynthesis. This chain is Acetyl-coenzyme A carboxylase carboxyl transferase subunit beta, chloroplastic, found in Solanum lycopersicum (Tomato).